The sequence spans 108 residues: Glutaredoxin-1 (108 aa).

Positions 3–106 (EEFVQQRLAN…DILLSIGVLR (104 aa)) constitute a Glutaredoxin domain. An intrachain disulfide couples cysteine 23 to cysteine 26.

Belongs to the glutaredoxin family.

It is found in the virion. Displays thioltransferase and dehydroascorbate reductase activities. The protein is Glutaredoxin-1 (OPG075) of Cynomys gunnisoni (Gunnison's prairie dog).